Here is a 187-residue protein sequence, read N- to C-terminus: MVKTVYVTGYKSFELNIFKDDAPEVHYLKQFIKHKIEQLLDEGLEWVLIQGQMGIELWTAEVVIELQRTYDSLKFAVITPFQGHTEKWNEHNQSKYANIIKHADYVDSIFHTSYQGPFQFKQADQFMLEHSDQTLLIYDEEQEASPKFFKQMLVDFMDKTNYTCDIVTFDELTAFINDLQWSEDQSF.

Belongs to the UPF0398 family.

In Staphylococcus aureus (strain MW2), this protein is UPF0398 protein MW1336.